Here is a 307-residue protein sequence, read N- to C-terminus: Thymidylate synthase (307 aa).

DUMP contacts are provided by residues Arg-26 and Arg-160–Arg-161. Cys-180 (nucleophile) is an active-site residue. DUMP-binding positions include Arg-209–Asp-212, Asn-220, and His-250–Tyr-252. Asp-212 is a binding site for (6R)-5,10-methylene-5,6,7,8-tetrahydrofolate. Ala-306 serves as a coordination point for (6R)-5,10-methylene-5,6,7,8-tetrahydrofolate.

The protein belongs to the thymidylate synthase family. Bacterial-type ThyA subfamily. In terms of assembly, homodimer.

Its subcellular location is the cytoplasm. The catalysed reaction is dUMP + (6R)-5,10-methylene-5,6,7,8-tetrahydrofolate = 7,8-dihydrofolate + dTMP. It participates in pyrimidine metabolism; dTTP biosynthesis. Functionally, catalyzes the reductive methylation of 2'-deoxyuridine-5'-monophosphate (dUMP) to 2'-deoxythymidine-5'-monophosphate (dTMP) while utilizing 5,10-methylenetetrahydrofolate (mTHF) as the methyl donor and reductant in the reaction, yielding dihydrofolate (DHF) as a by-product. This enzymatic reaction provides an intracellular de novo source of dTMP, an essential precursor for DNA biosynthesis. The chain is Thymidylate synthase from Rhizobium rhizogenes (strain K84 / ATCC BAA-868) (Agrobacterium radiobacter).